We begin with the raw amino-acid sequence, 111 residues long: Universal stress protein B (111 aa).

A run of 2 helical transmembrane segments spans residues 1–21 and 90–110; these read MIST…NMAR and FILT…LMIW.

The protein belongs to the universal stress protein B family.

It is found in the cell inner membrane. This is Universal stress protein B from Escherichia coli O45:K1 (strain S88 / ExPEC).